Consider the following 446-residue polypeptide: Probable polyamine aminopropyl transferase (446 aa).

The tract at residues 1–117 (MVEPAIGRNH…KRIACVVSAV (117 aa)) is unknown. Positions 64 to 94 (GRGAERWHRSPRQANGRFSNQRYSSTSPNSS) are disordered. The span at 75-94 (RQANGRFSNQRYSSTSPNSS) shows a compositional bias: polar residues. Residues 116-351 (AVIFVATSCV…ELFAKKPGSG (236 aa)) enclose the PABS domain. The segment at 118–353 (IFVATSCVSP…FAKKPGSGSE (236 aa)) is spermidine synthase. Residues Asn147, Glu226, and 251-252 (DG) each bind S-methyl-5'-thioadenosine. The active-site Proton acceptor is Asp269.

This sequence belongs to the spermidine/spermine synthase family. In terms of assembly, homodimer or homotetramer.

It is found in the cytoplasm. It catalyses the reaction S-adenosyl 3-(methylsulfanyl)propylamine + putrescine = S-methyl-5'-thioadenosine + spermidine + H(+). The protein operates within amine and polyamine biosynthesis; spermidine biosynthesis; spermidine from putrescine: step 1/1. Its function is as follows. Catalyzes the irreversible transfer of a propylamine group from the amino donor S-adenosylmethioninamine (decarboxy-AdoMet) to putrescine (1,4-diaminobutane) to yield spermidine. This chain is Probable polyamine aminopropyl transferase (speE), found in Bifidobacterium longum (strain NCC 2705).